Consider the following 348-residue polypeptide: Dihydroorotase (348 aa).

Zn(2+)-binding residues include histidine 17 and histidine 19. Substrate is bound by residues 19-21 and asparagine 45; that span reads HLR. Zn(2+) contacts are provided by lysine 103, histidine 140, and histidine 178. Position 103 is an N6-carboxylysine (lysine 103). A substrate-binding site is contributed by histidine 140. Leucine 223 is a binding site for substrate. Residue aspartate 251 participates in Zn(2+) binding. The active site involves aspartate 251. Substrate-binding residues include histidine 255 and alanine 267.

Belongs to the metallo-dependent hydrolases superfamily. DHOase family. Class II DHOase subfamily. Homodimer. The cofactor is Zn(2+).

The catalysed reaction is (S)-dihydroorotate + H2O = N-carbamoyl-L-aspartate + H(+). Its pathway is pyrimidine metabolism; UMP biosynthesis via de novo pathway; (S)-dihydroorotate from bicarbonate: step 3/3. In terms of biological role, catalyzes the reversible cyclization of carbamoyl aspartate to dihydroorotate. The protein is Dihydroorotase of Escherichia fergusonii (strain ATCC 35469 / DSM 13698 / CCUG 18766 / IAM 14443 / JCM 21226 / LMG 7866 / NBRC 102419 / NCTC 12128 / CDC 0568-73).